The sequence spans 532 residues: Zinc finger protein ZIC 2 (532 aa).

Residues 100–255 (PHAAHVGSYS…YMRQQCIKQE (156 aa)) form a necessary for interaction with MDFIC and transcriptional activation or repression region. A phosphoserine mark is found at Ser191 and Ser199. Lys253 is covalently cross-linked (Glycyl lysine isopeptide (Lys-Gly) (interchain with G-Cter in SUMO2)). Residues 256–291 (LICKWIDPEQLSNPKKSCNKTFSTMHELVTHVSVEH) form a C2H2-type 1; atypical zinc finger. Residues 300 to 327 (HVCFWEECPREGKPFKAKYKLVNHIRVH) form a C2H2-type 2; atypical zinc finger. 3 C2H2-type zinc fingers span residues 333–357 (FPCP…KRTH), 363–387 (FQCE…MHVH), and 393–415 (YLCK…MKVH). Disordered regions lie at residues 406–452 (SSLR…SSSN) and 475–532 (HRGG…EWYV). Residues 417–435 (SSPQGSESSPAASSGYESS) show a composition bias toward low complexity. The span at 476 to 521 (RGGGSGSGGAGGGSGGGSGSGGGGGGAGGGGGGSSGGGSGTAGGHS) shows a compositional bias: gly residues. Polar residues predominate over residues 523 to 532 (LSSNFNEWYV).

Belongs to the GLI C2H2-type zinc-finger protein family. In terms of assembly, interacts with RNF180. Interacts (via the C2H2-type domains 3, 4 and 5) with MDFIC (via the C2H2-type domains 3, 4 and 5); the interaction reduces its transcriptional activity. Interacts with GLI1 and GLI2. Interacts (via C2H2-type domain 3) with DHX9. Phosphorylated. Post-translationally, ubiquitinated by RNF180, leading to its degradation.

The protein resides in the nucleus. It is found in the cytoplasm. In terms of biological role, acts as a transcriptional activator or repressor. Plays important roles in the early stage of organogenesis of the CNS. Activates the transcription of the serotonin transporter SERT in uncrossed ipsilateral retinal ganglion cells (iRGCs) to refine eye-specific projections in primary visual targets. Its transcriptional activity is repressed by MDFIC. Involved in the formation of the ipsilateral retinal projection at the optic chiasm midline. Drives the expression of EPHB1 on ipsilaterally projecting growth cones. Binds to the minimal GLI-consensus sequence 5'-TGGGTGGTC-3'. Associates to the basal SERT promoter region from ventrotemporal retinal segments of retinal embryos. The protein is Zinc finger protein ZIC 2 (ZIC2) of Homo sapiens (Human).